Reading from the N-terminus, the 193-residue chain is CASP-like protein 1D1 (193 aa).

The interval 1–24 (MGYETKSTLDTERSTAPGTGTTTK) is disordered. At 1-30 (MGYETKSTLDTERSTAPGTGTTTKSCSMTQ) the chain is on the cytoplasmic side. Residues 14–24 (STAPGTGTTTK) are compositionally biased toward polar residues. Residues 31–51 (VVLRFVLFAATLTSIVVMVTS) traverse the membrane as a helical segment. Residues 52-76 (KQTKNIFLPGTPIRIPAAEFTNSPA) are Extracellular-facing. The chain crosses the membrane as a helical span at residues 77–97 (LIYFVVALSVACFYSIVSTFV). The Cytoplasmic portion of the chain corresponds to 98–108 (TVSAFKKHSCS). The helical transmembrane segment at 109–129 (AVLLLNLAIMDAVMVGIVASA) threads the bilayer. Residues 130-162 (TGAGGGVAYLGLKGNKEVRWGKICHIYDKFCRH) lie on the Extracellular side of the membrane. Residues 163–183 (VGGAIAVSLFASVVLLLLSII) traverse the membrane as a helical segment. Over 184–193 (SVLSLYKKIR) the chain is Cytoplasmic.

Belongs to the Casparian strip membrane proteins (CASP) family. Homodimer and heterodimers.

It is found in the cell membrane. This Arabidopsis thaliana (Mouse-ear cress) protein is CASP-like protein 1D1.